A 49-amino-acid polypeptide reads, in one-letter code: Large ribosomal subunit protein bL36 (49 aa).

It belongs to the bacterial ribosomal protein bL36 family.

The sequence is that of Large ribosomal subunit protein bL36 from Delftia acidovorans (strain DSM 14801 / SPH-1).